Reading from the N-terminus, the 295-residue chain is Probable lipid kinase YegS-like (295 aa).

One can recognise a DAGKc domain in the interval 1-129 (MQGRKAMLVL…IDLGQAGDQL (129 aa)). Residues Thr39, 65-71 (GDGTLRD), and Thr92 each bind ATP. Positions 210, 213, and 215 each coordinate Mg(2+). The active-site Proton acceptor is the Glu264.

This sequence belongs to the diacylglycerol/lipid kinase family. YegS lipid kinase subfamily. Mg(2+) serves as cofactor. The cofactor is Ca(2+).

The protein localises to the cytoplasm. In terms of biological role, probably phosphorylates lipids; the in vivo substrate is unknown. The sequence is that of Probable lipid kinase YegS-like from Pseudomonas putida (strain ATCC 47054 / DSM 6125 / CFBP 8728 / NCIMB 11950 / KT2440).